The sequence spans 348 residues: Phosphatidylinositol 3,4,5-trisphosphate 3-phosphatase ptn1 (348 aa).

The Phosphatase tensin-type domain maps to 18–189; the sequence is EKVNRSFAYL…YYIEILKQFP (172 aa). Cys-129 serves as the catalytic Phosphocysteine intermediate.

It localises to the cytoplasmic vesicle. It carries out the reaction a 1,2-diacyl-sn-glycero-3-phospho-(1D-myo-inositol-3,4,5-trisphosphate) + H2O = a 1,2-diacyl-sn-glycero-3-phospho-(1D-myo-inositol-4,5-bisphosphate) + phosphate. The enzyme catalyses 1,2-dioctanoyl-sn-glycero-3-phospho-(1D-myo-inositol-3,4,5-trisphosphate) + H2O = 1,2-dioctanoyl-sn-glycero-3-phospho-(1D-myo-inositol-4,5-bisphosphate) + phosphate. The catalysed reaction is 1,2-dihexadecanoyl-sn-glycero-3-phospho-(1D-myo-inositol-3,4,5-trisphosphate) + H2O = 1,2-dihexadecanoyl-sn-glycero-3-phospho-(1D-myo-inositol-4,5-bisphosphate) + phosphate. Functionally, acts as a phosphoinositide 3-phosphatase and regulates PtdIns(3,4,5)P3 levels. The sequence is that of Phosphatidylinositol 3,4,5-trisphosphate 3-phosphatase ptn1 (ptn1) from Schizosaccharomyces pombe (strain 972 / ATCC 24843) (Fission yeast).